The sequence spans 81 residues: Photosystem I iron-sulfur center (81 aa).

2 4Fe-4S ferredoxin-type domains span residues 2-31 (SHAVKIYDTCIGCTQCVRACPLDVLEMVPW) and 37-68 (GQIASSPRTEDCVGCKRCETACPTDFLSIRVY). 8 residues coordinate [4Fe-4S] cluster: Cys11, Cys14, Cys17, Cys21, Cys48, Cys51, Cys54, and Cys58.

In terms of assembly, the cyanobacterial PSI reaction center is composed of one copy each of PsaA,B,C,D,E,F,I,J,K,L,M and X, and forms trimeric complexes. Requires [4Fe-4S] cluster as cofactor.

Its subcellular location is the cellular thylakoid membrane. The enzyme catalyses reduced [plastocyanin] + hnu + oxidized [2Fe-2S]-[ferredoxin] = oxidized [plastocyanin] + reduced [2Fe-2S]-[ferredoxin]. Its function is as follows. Apoprotein for the two 4Fe-4S centers FA and FB of photosystem I (PSI); essential for photochemical activity. FB is the terminal electron acceptor of PSI, donating electrons to ferredoxin. The C-terminus interacts with PsaA/B/D and helps assemble the protein into the PSI complex. Required for binding of PsaD and PsaE to PSI. PSI is a plastocyanin/cytochrome c6-ferredoxin oxidoreductase, converting photonic excitation into a charge separation, which transfers an electron from the donor P700 chlorophyll pair to the spectroscopically characterized acceptors A0, A1, FX, FA and FB in turn. The chain is Photosystem I iron-sulfur center from Prochlorococcus marinus subsp. pastoris (strain CCMP1986 / NIES-2087 / MED4).